Here is a 1051-residue protein sequence, read N- to C-terminus: Outer capsid protein VP2 (1051 aa).

This sequence belongs to the orbivirus VP2 family.

It is found in the virion. The VP2 protein is one of the two proteins (with VP5) which constitute the virus particle outer capsid. It is the major target of the host immunogenic response. The sequence is that of Outer capsid protein VP2 (Segment-2) from African horse sickness virus (AHSV).